A 358-amino-acid chain; its full sequence is 5-amino-6-(D-ribitylamino)uracil--L-tyrosine 4-hydroxyphenyl transferase 2 (358 aa).

Residues 45 to 292 (VTFVKNTNIE…ESIKNIQAPR (248 aa)) form the Radical SAM core domain. Positions 59, 63, and 66 each coordinate [4Fe-4S] cluster.

The protein belongs to the radical SAM superfamily. CofH family. Consists of two subunits, CofG and CofH. The cofactor is [4Fe-4S] cluster.

The catalysed reaction is 5-amino-6-(D-ribitylamino)uracil + L-tyrosine + S-adenosyl-L-methionine = 5-amino-5-(4-hydroxybenzyl)-6-(D-ribitylimino)-5,6-dihydrouracil + 2-iminoacetate + 5'-deoxyadenosine + L-methionine + H(+). It functions in the pathway cofactor biosynthesis; coenzyme F0 biosynthesis. In terms of biological role, catalyzes the radical-mediated synthesis of 5-amino-5-(4-hydroxybenzyl)-6-(D-ribitylimino)-5,6-dihydrouracil from 5-amino-6-(D-ribitylamino)uracil and L-tyrosine. The protein is 5-amino-6-(D-ribitylamino)uracil--L-tyrosine 4-hydroxyphenyl transferase 2 of Methanococcus maripaludis (strain DSM 14266 / JCM 13030 / NBRC 101832 / S2 / LL).